A 248-amino-acid chain; its full sequence is Probable transcriptional regulatory protein BH14810 (248 aa).

It belongs to the TACO1 family.

It localises to the cytoplasm. This is Probable transcriptional regulatory protein BH14810 from Bartonella henselae (strain ATCC 49882 / DSM 28221 / CCUG 30454 / Houston 1) (Rochalimaea henselae).